The sequence spans 447 residues: Methylenetetrahydrofolate--tRNA-(uracil-5-)-methyltransferase TrmFO (447 aa).

FAD is bound at residue 10–15; it reads GAGLAG.

It belongs to the MnmG family. TrmFO subfamily. It depends on FAD as a cofactor.

It localises to the cytoplasm. The enzyme catalyses uridine(54) in tRNA + (6R)-5,10-methylene-5,6,7,8-tetrahydrofolate + NADH + H(+) = 5-methyluridine(54) in tRNA + (6S)-5,6,7,8-tetrahydrofolate + NAD(+). It catalyses the reaction uridine(54) in tRNA + (6R)-5,10-methylene-5,6,7,8-tetrahydrofolate + NADPH + H(+) = 5-methyluridine(54) in tRNA + (6S)-5,6,7,8-tetrahydrofolate + NADP(+). Catalyzes the folate-dependent formation of 5-methyl-uridine at position 54 (M-5-U54) in all tRNAs. The sequence is that of Methylenetetrahydrofolate--tRNA-(uracil-5-)-methyltransferase TrmFO from Lactococcus lactis subsp. lactis (strain IL1403) (Streptococcus lactis).